Reading from the N-terminus, the 449-residue chain is ATP-dependent protease ATPase subunit HslU (449 aa).

ATP is bound by residues isoleucine 18, 60-65, aspartate 261, glutamate 327, and arginine 399; that span reads GVGKTE.

Belongs to the ClpX chaperone family. HslU subfamily. A double ring-shaped homohexamer of HslV is capped on each side by a ring-shaped HslU homohexamer. The assembly of the HslU/HslV complex is dependent on binding of ATP.

The protein localises to the cytoplasm. In terms of biological role, ATPase subunit of a proteasome-like degradation complex; this subunit has chaperone activity. The binding of ATP and its subsequent hydrolysis by HslU are essential for unfolding of protein substrates subsequently hydrolyzed by HslV. HslU recognizes the N-terminal part of its protein substrates and unfolds these before they are guided to HslV for hydrolysis. The sequence is that of ATP-dependent protease ATPase subunit HslU from Oleidesulfovibrio alaskensis (strain ATCC BAA-1058 / DSM 17464 / G20) (Desulfovibrio alaskensis).